A 94-amino-acid chain; its full sequence is MGRSLKKGPYCDAKLLKKIIDMNEKGEKRVIKTWSRRSTIFPEMVGHTIAVHDGRKHVPIYITEDMVGHKLGEFAPTRVFRGHGAHTERSTALK.

The protein belongs to the universal ribosomal protein uS19 family.

Protein S19 forms a complex with S13 that binds strongly to the 16S ribosomal RNA. The sequence is that of Small ribosomal subunit protein uS19 from Moorella thermoacetica (strain ATCC 39073 / JCM 9320).